The chain runs to 355 residues: Erythronate-4-phosphate dehydrogenase (355 aa).

2 residues coordinate substrate: Ser45 and Thr66. Residue Asp146 coordinates NAD(+). The active site involves Arg206. Position 229 (Asp229) interacts with NAD(+). Residue Glu234 is part of the active site. His251 (proton donor) is an active-site residue. Gly254 serves as a coordination point for NAD(+). Tyr255 is a substrate binding site.

The protein belongs to the D-isomer specific 2-hydroxyacid dehydrogenase family. PdxB subfamily. In terms of assembly, homodimer.

Its subcellular location is the cytoplasm. It carries out the reaction 4-phospho-D-erythronate + NAD(+) = (R)-3-hydroxy-2-oxo-4-phosphooxybutanoate + NADH + H(+). It functions in the pathway cofactor biosynthesis; pyridoxine 5'-phosphate biosynthesis; pyridoxine 5'-phosphate from D-erythrose 4-phosphate: step 2/5. Its function is as follows. Catalyzes the oxidation of erythronate-4-phosphate to 3-hydroxy-2-oxo-4-phosphonooxybutanoate. In Acinetobacter baylyi (strain ATCC 33305 / BD413 / ADP1), this protein is Erythronate-4-phosphate dehydrogenase.